A 238-amino-acid polypeptide reads, in one-letter code: MIAFIVLLSLAAVLQQSSGTVDFASESSNKKNYQKEIVDKHNALRRSVKPTARNMLQMKWNSHAAQNAKRWADRCTFAHSPPNTRTVGKLRCGENIFMSSQPFPWSGVVQAWYDEIKNFVYGIGAKPPGSVIGHYTQVVWYKSHLIGCASAKCSSSKYLYVCQYCPAGNIRGSIATPYKSGPPCADCPSACVNRLCTNPCNYNNDFSNCKSLAKKSKCQTEWIKKKCPASCFCHNKII.

Residues 1–19 (MIAFIVLLSLAAVLQQSSG) form the signal peptide. The propeptide occupies 20–28 (TVDFASESS). The 127-residue stretch at 38–164 (VDKHNALRRS…SSKYLYVCQY (127 aa)) folds into the SCP domain. Zn(2+) is bound by residues Thr-51 and Ser-106. 8 cysteine pairs are disulfide-bonded: Cys-75-Cys-153, Cys-92-Cys-165, Cys-148-Cys-162, Cys-184-Cys-191, Cys-187-Cys-196, Cys-200-Cys-233, Cys-209-Cys-227, and Cys-218-Cys-231. Positions 200–233 (CNYNNDFSNCKSLAKKSKCQTEWIKKKCPASCFC) constitute a ShKT domain.

In terms of tissue distribution, expressed by the venom gland.

The protein localises to the secreted. Functionally, blocks olfactory (CNGA2) and retinal (CNGA1) CNG channel currents. Is really less potent that Pseudechetoxin. Does not affect neither depolarization- nor caffeine-induced contraction of smooth muscle. The chain is Cysteine-rich venom protein pseudecin from Pseudechis porphyriacus (Red-bellied black snake).